Consider the following 738-residue polypeptide: Exocyst complex component 3 (738 aa).

Residues leucine 28–valine 91 are a coiled coil.

This sequence belongs to the SEC6 family. As to quaternary structure, the exocyst complex is composed of Sec3/Exoc1, Sec5/Exoc2, Sec6/Exoc3, Sec8/Exoc4, Sec10/Exoc5, Sec15/Exoc6, Exo70/Exoc7 and Exo84/Exoc8.

Component of the exocyst complex involved in the docking of exocytic vesicles with fusion sites on the plasma membrane. This chain is Exocyst complex component 3, found in Drosophila melanogaster (Fruit fly).